Reading from the N-terminus, the 213-residue chain is Probable septum site-determining protein MinC (213 aa).

Belongs to the MinC family. Interacts with MinD and FtsZ.

Cell division inhibitor that blocks the formation of polar Z ring septums. Rapidly oscillates between the poles of the cell to destabilize FtsZ filaments that have formed before they mature into polar Z rings. Prevents FtsZ polymerization. The sequence is that of Probable septum site-determining protein MinC from Pseudothermotoga lettingae (strain ATCC BAA-301 / DSM 14385 / NBRC 107922 / TMO) (Thermotoga lettingae).